The sequence spans 264 residues: Small ribosomal subunit protein uS2 (264 aa).

A disordered region spans residues 222-246 (GRSENKDEQNEQGEQIAPVTNEEKQ).

The protein belongs to the universal ribosomal protein uS2 family.

This Helicobacter hepaticus (strain ATCC 51449 / 3B1) protein is Small ribosomal subunit protein uS2.